The primary structure comprises 328 residues: Carbonic anhydrase-related protein 11 (328 aa).

The signal sequence occupies residues 1–23 (MGAAPRLSAPRVLVLWAALGAAA). The region spanning 33–303 (DWWSYKDNLQ…LAHRALRGNR (271 aa)) is the Alpha-carbonic anhydrase domain. A glycan (N-linked (GlcNAc...) asparagine) is linked at Asn-118. The interval 300–328 (RGNRDPRHPERRCRGPNYRLHVDDVPHGL) is disordered. Positions 319 to 328 (LHVDDVPHGL) are enriched in basic and acidic residues.

Belongs to the alpha-carbonic anhydrase family.

The protein resides in the secreted. In terms of biological role, does not have a catalytic activity. This Ovis aries (Sheep) protein is Carbonic anhydrase-related protein 11 (CA11).